A 261-amino-acid chain; its full sequence is Proteasome assembly chaperone 2 (261 aa).

This sequence belongs to the PSMG2 family. As to quaternary structure, forms a heterodimer with psmg1. Degraded by the proteasome upon completion of 20S proteasome maturation.

Its subcellular location is the nucleus. Its function is as follows. Chaperone protein which promotes assembly of the 20S proteasome as part of a heterodimer with psmg1. This is Proteasome assembly chaperone 2 from Xenopus tropicalis (Western clawed frog).